The chain runs to 471 residues: Proline--tRNA ligase 2 (471 aa).

This sequence belongs to the class-II aminoacyl-tRNA synthetase family. ProS type 3 subfamily. As to quaternary structure, homodimer.

It is found in the cytoplasm. The catalysed reaction is tRNA(Pro) + L-proline + ATP = L-prolyl-tRNA(Pro) + AMP + diphosphate. Its function is as follows. Catalyzes the attachment of proline to tRNA(Pro) in a two-step reaction: proline is first activated by ATP to form Pro-AMP and then transferred to the acceptor end of tRNA(Pro). This chain is Proline--tRNA ligase 2, found in Streptomyces avermitilis (strain ATCC 31267 / DSM 46492 / JCM 5070 / NBRC 14893 / NCIMB 12804 / NRRL 8165 / MA-4680).